A 170-amino-acid polypeptide reads, in one-letter code: Adenine phosphoribosyltransferase (170 aa).

The protein belongs to the purine/pyrimidine phosphoribosyltransferase family. Homodimer.

The protein localises to the cytoplasm. It catalyses the reaction AMP + diphosphate = 5-phospho-alpha-D-ribose 1-diphosphate + adenine. Its pathway is purine metabolism; AMP biosynthesis via salvage pathway; AMP from adenine: step 1/1. Its function is as follows. Catalyzes a salvage reaction resulting in the formation of AMP, that is energically less costly than de novo synthesis. The sequence is that of Adenine phosphoribosyltransferase from Geobacillus sp. (strain WCH70).